Reading from the N-terminus, the 416-residue chain is E3 ubiquitin-protein ligase DMA1 (416 aa).

Residues 1-30 are disordered; the sequence is MSTNTVPSSPPNQTPPAASGIATSHDHTKF. Residues Lys150, Lys204, Lys217, Lys237, Lys240, Lys260, Lys300, Lys306, Lys313, and Lys317 each participate in a glycyl lysine isopeptide (Lys-Gly) (interchain with G-Cter in ubiquitin) cross-link. One can recognise an FHA domain in the interval 189–252; the sequence is IIIGRYTERV…SGTFLNHQRL (64 aa). The segment at 327–371 adopts an RING-type zinc-finger fold; it reads CSICLNKIKPCQAIFISPCAHSWHFHCVRRLVIMNYPQFMCPNCR.

Belongs to the DMA1 family. In terms of assembly, interacts with CDC123. Interacts with PCL1. UBC4-dependent autoubiquitination occurs at Lys-150, Lys-204, Lys-217, Lys-237, Lys-240, Lys-260, Lys-300, Lys-306, Lys-313 and Lys-317. UBC4-dependent autoubiquitination is responsible for DMA2 turnover. UBC13/MMS2-dependent autoubiquitination occurs at Lys-237 and Lys-306. Lys-204 and Lys-306 are also ubiquitinated in trans by DMA2 E3 ligase in association with UBC4.

It localises to the cytoplasm. The enzyme catalyses S-ubiquitinyl-[E2 ubiquitin-conjugating enzyme]-L-cysteine + [acceptor protein]-L-lysine = [E2 ubiquitin-conjugating enzyme]-L-cysteine + N(6)-ubiquitinyl-[acceptor protein]-L-lysine.. Functionally, E3 ubiquitin-protein ligase which functions in cell cycle retarding in conjunction with the UBC4 and UBC13/MMS2 complex, 2 E2 ubiquitin conjugating enzymes. Involved in nutritional control of the cell cycle. Targets the G1 cyclin PCL1 for destruction. Required for proper spindle positioning, likely regulating septin ring deposition at the bud neck. This Saccharomyces cerevisiae (strain ATCC 204508 / S288c) (Baker's yeast) protein is E3 ubiquitin-protein ligase DMA1.